Here is a 151-residue protein sequence, read N- to C-terminus: Cell division control protein 2 homolog 2 (151 aa).

A Protein kinase domain is found at 1–151 (ALKEIRMDNE…IMQTLQIESL (151 aa)). Lys-3 provides a ligand contact to ATP. The active-site Proton acceptor is Asp-113.

This sequence belongs to the protein kinase superfamily. CMGC Ser/Thr protein kinase family. CDC2/CDKX subfamily.

It catalyses the reaction L-seryl-[protein] + ATP = O-phospho-L-seryl-[protein] + ADP + H(+). The enzyme catalyses L-threonyl-[protein] + ATP = O-phospho-L-threonyl-[protein] + ADP + H(+). The catalysed reaction is [DNA-directed RNA polymerase] + ATP = phospho-[DNA-directed RNA polymerase] + ADP + H(+). The polypeptide is Cell division control protein 2 homolog 2 (Pisum sativum (Garden pea)).